A 238-amino-acid polypeptide reads, in one-letter code: MTHVDIAATIAPEDKLSKTLLKDIKVNEESIDIIELRIDQWPSFNKALLNEVIKQLKIFHLKILVTYRTSVQGGKGAVNEQEYLNILGELIECPQFDMIDIEWSSAVKIEKYTHLVQRAQQKGLEVVLSHHNFQETPALDELKFIYFKMQKLNPEYLKLAVMPKCQEDVLHLLEAMSLTAKHTTCRIVGISMSSLGKVSRIAQGVFGGTLSYGCIEEPQAPGQIHVSKLKSMVSFYED.

3-dehydroquinate-binding positions include 35-37 (ELR) and Arg68. His131 serves as the catalytic Proton donor/acceptor. Catalysis depends on Lys158, which acts as the Schiff-base intermediate with substrate. Arg200 and Gln223 together coordinate 3-dehydroquinate.

It belongs to the type-I 3-dehydroquinase family. As to quaternary structure, homodimer.

It catalyses the reaction 3-dehydroquinate = 3-dehydroshikimate + H2O. It functions in the pathway metabolic intermediate biosynthesis; chorismate biosynthesis; chorismate from D-erythrose 4-phosphate and phosphoenolpyruvate: step 3/7. Involved in the third step of the chorismate pathway, which leads to the biosynthesis of aromatic amino acids. Catalyzes the cis-dehydration of 3-dehydroquinate (DHQ) and introduces the first double bond of the aromatic ring to yield 3-dehydroshikimate. This Staphylococcus epidermidis (strain ATCC 35984 / DSM 28319 / BCRC 17069 / CCUG 31568 / BM 3577 / RP62A) protein is 3-dehydroquinate dehydratase.